We begin with the raw amino-acid sequence, 349 residues long: GDSL esterase/lipase At1g58725 (349 aa).

The N-terminal stretch at Met1 to Ala19 is a signal peptide. Residue Asn25 is glycosylated (N-linked (GlcNAc...) asparagine). Residue Ser37 is the Nucleophile of the active site. Asn316 carries an N-linked (GlcNAc...) asparagine glycan. Residues Asp324 and His327 contribute to the active site.

Belongs to the 'GDSL' lipolytic enzyme family.

The protein localises to the secreted. This chain is GDSL esterase/lipase At1g58725, found in Arabidopsis thaliana (Mouse-ear cress).